A 76-amino-acid chain; its full sequence is UPF0154 protein Exig_1099 (76 aa).

Residues Trp4–Ile24 form a helical membrane-spanning segment. Residues Lys54–Lys76 are disordered.

This sequence belongs to the UPF0154 family.

It is found in the cell membrane. This is UPF0154 protein Exig_1099 from Exiguobacterium sibiricum (strain DSM 17290 / CCUG 55495 / CIP 109462 / JCM 13490 / 255-15).